Here is a 238-residue protein sequence, read N- to C-terminus: Chorionic somatomammotropin hormone 2 (238 aa).

An N-terminal signal peptide occupies residues 1 to 36; it reads MAPAPSFRGHQWTYNPVRGSCLLLLLVVSNLLLCQG. Position 66 (H66) interacts with Zn(2+). 4 N-linked (GlcNAc...) asparagine glycosylation sites follow: N70, N92, N146, and N160. C97 and C215 are oxidised to a cystine. Residue D224 coordinates Zn(2+). Cysteines 232 and 238 form a disulfide.

The protein belongs to the somatotropin/prolactin family.

It localises to the secreted. In Bos taurus (Bovine), this protein is Chorionic somatomammotropin hormone 2 (CSH2).